The primary structure comprises 334 residues: Holliday junction branch migration complex subunit RuvB (334 aa).

Residues 1–179 (MTHKISVLHQ…FAFTGRVDYY (179 aa)) form a large ATPase domain (RuvB-L) region. Residues leucine 18, arginine 19, glycine 60, lysine 63, threonine 64, serine 65, 126-128 (EDF), arginine 169, tyrosine 179, and arginine 216 contribute to the ATP site. Threonine 64 provides a ligand contact to Mg(2+). The segment at 180–250 (TDEDLVSILS…VAEKALAMLL (71 aa)) is small ATPAse domain (RuvB-S). Positions 253-334 (NLGLNEIDIK…RNPKDRWGEE (82 aa)) are head domain (RuvB-H). The DNA site is built by arginine 308 and arginine 313.

The protein belongs to the RuvB family. In terms of assembly, homohexamer. Forms an RuvA(8)-RuvB(12)-Holliday junction (HJ) complex. HJ DNA is sandwiched between 2 RuvA tetramers; dsDNA enters through RuvA and exits via RuvB. An RuvB hexamer assembles on each DNA strand where it exits the tetramer. Each RuvB hexamer is contacted by two RuvA subunits (via domain III) on 2 adjacent RuvB subunits; this complex drives branch migration. In the full resolvosome a probable DNA-RuvA(4)-RuvB(12)-RuvC(2) complex forms which resolves the HJ.

It localises to the cytoplasm. It catalyses the reaction ATP + H2O = ADP + phosphate + H(+). The RuvA-RuvB-RuvC complex processes Holliday junction (HJ) DNA during genetic recombination and DNA repair, while the RuvA-RuvB complex plays an important role in the rescue of blocked DNA replication forks via replication fork reversal (RFR). RuvA specifically binds to HJ cruciform DNA, conferring on it an open structure. The RuvB hexamer acts as an ATP-dependent pump, pulling dsDNA into and through the RuvAB complex. RuvB forms 2 homohexamers on either side of HJ DNA bound by 1 or 2 RuvA tetramers; 4 subunits per hexamer contact DNA at a time. Coordinated motions by a converter formed by DNA-disengaged RuvB subunits stimulates ATP hydrolysis and nucleotide exchange. Immobilization of the converter enables RuvB to convert the ATP-contained energy into a lever motion, pulling 2 nucleotides of DNA out of the RuvA tetramer per ATP hydrolyzed, thus driving DNA branch migration. The RuvB motors rotate together with the DNA substrate, which together with the progressing nucleotide cycle form the mechanistic basis for DNA recombination by continuous HJ branch migration. Branch migration allows RuvC to scan DNA until it finds its consensus sequence, where it cleaves and resolves cruciform DNA. The polypeptide is Holliday junction branch migration complex subunit RuvB (Chlamydia trachomatis serovar L2 (strain ATCC VR-902B / DSM 19102 / 434/Bu)).